A 61-amino-acid chain; its full sequence is Photosystem II reaction center protein K (61 aa).

The propeptide occupies 1–24 (MPNILSLTCICFNSVLYPTSFFFA). Residues 32-52 (IFNPIVDIMPVIPLFFFLLAF) traverse the membrane as a helical segment.

Belongs to the PsbK family. As to quaternary structure, PSII is composed of 1 copy each of membrane proteins PsbA, PsbB, PsbC, PsbD, PsbE, PsbF, PsbH, PsbI, PsbJ, PsbK, PsbL, PsbM, PsbT, PsbX, PsbY, PsbZ, Psb30/Ycf12, at least 3 peripheral proteins of the oxygen-evolving complex and a large number of cofactors. It forms dimeric complexes. Detected in both etioplasts and green leaves; PSII is only assembled in green leaves.

The protein resides in the plastid. Its subcellular location is the chloroplast thylakoid membrane. Its function is as follows. One of the components of the core complex of photosystem II (PSII). PSII is a light-driven water:plastoquinone oxidoreductase that uses light energy to abstract electrons from H(2)O, generating O(2) and a proton gradient subsequently used for ATP formation. It consists of a core antenna complex that captures photons, and an electron transfer chain that converts photonic excitation into a charge separation. In Hordeum vulgare (Barley), this protein is Photosystem II reaction center protein K.